The following is a 146-amino-acid chain: Hemoglobin subunit beta (146 aa).

Position 1 is an N-acetylvaline (Val1). The 145-residue stretch at 2–146 (HLTGEEKAAV…VANALAHKYH (145 aa)) folds into the Globin domain. At Thr12 the chain carries Phosphothreonine. Ser44 bears the Phosphoserine mark. Lys59 bears the N6-acetyllysine mark. Position 63 (His63) interacts with heme b. The residue at position 82 (Lys82) is an N6-acetyllysine. His92 contacts heme b. Cys93 carries the S-nitrosocysteine modification. Lys144 is modified (N6-acetyllysine).

The protein belongs to the globin family. As to quaternary structure, heterotetramer of two alpha chains and two beta chains. In terms of tissue distribution, red blood cells.

Involved in oxygen transport from the lung to the various peripheral tissues. This chain is Hemoglobin subunit beta (HBB), found in Mustela putorius furo (European domestic ferret).